A 207-amino-acid polypeptide reads, in one-letter code: Large ribosomal subunit protein bL25 (207 aa).

Positions 182 to 207 are disordered; that stretch reads QDLGDESVQEEQAAESAEGESEGSED.

It belongs to the bacterial ribosomal protein bL25 family. CTC subfamily. In terms of assembly, part of the 50S ribosomal subunit; part of the 5S rRNA/L5/L18/L25 subcomplex. Contacts the 5S rRNA. Binds to the 5S rRNA independently of L5 and L18.

Functionally, this is one of the proteins that binds to the 5S RNA in the ribosome where it forms part of the central protuberance. In Micrococcus luteus (strain ATCC 4698 / DSM 20030 / JCM 1464 / CCM 169 / CCUG 5858 / IAM 1056 / NBRC 3333 / NCIMB 9278 / NCTC 2665 / VKM Ac-2230) (Micrococcus lysodeikticus), this protein is Large ribosomal subunit protein bL25.